The following is a 125-amino-acid chain: Large ribosomal subunit protein bL12 (125 aa).

It belongs to the bacterial ribosomal protein bL12 family. As to quaternary structure, homodimer. Part of the ribosomal stalk of the 50S ribosomal subunit. Forms a multimeric L10(L12)X complex, where L10 forms an elongated spine to which 2 to 4 L12 dimers bind in a sequential fashion. Binds GTP-bound translation factors.

Forms part of the ribosomal stalk which helps the ribosome interact with GTP-bound translation factors. Is thus essential for accurate translation. The polypeptide is Large ribosomal subunit protein bL12 (Gluconacetobacter diazotrophicus (strain ATCC 49037 / DSM 5601 / CCUG 37298 / CIP 103539 / LMG 7603 / PAl5)).